The chain runs to 227 residues: Exodeoxyribonuclease (227 aa).

The catalysed reaction is Exonucleolytic cleavage in the 3'- to 5'-direction to yield nucleoside 5'-phosphates.. In terms of biological role, 3'-5' exonuclease that preferentially uses ssDNA as substrate. Plays a role in group I intron homing. May play a role in the final step of host DNA degradation, by scavenging DNA into mononucleotides. This is Exodeoxyribonuclease (dexA) from Escherichia coli (Bacteriophage T4).